The chain runs to 415 residues: Imidazolonepropionase (415 aa).

Residues histidine 80 and histidine 82 each coordinate Fe(3+). Zn(2+)-binding residues include histidine 80 and histidine 82. 4-imidazolone-5-propanoate is bound by residues arginine 89, tyrosine 152, and histidine 185. Tyrosine 152 is a binding site for N-formimidoyl-L-glutamate. Histidine 250 contacts Fe(3+). Residue histidine 250 participates in Zn(2+) binding. 4-imidazolone-5-propanoate is bound at residue glutamine 253. Aspartate 325 lines the Fe(3+) pocket. Aspartate 325 provides a ligand contact to Zn(2+). N-formimidoyl-L-glutamate contacts are provided by asparagine 327 and glycine 329. Residue threonine 330 coordinates 4-imidazolone-5-propanoate.

This sequence belongs to the metallo-dependent hydrolases superfamily. HutI family. It depends on Zn(2+) as a cofactor. Requires Fe(3+) as cofactor.

Its subcellular location is the cytoplasm. It catalyses the reaction 4-imidazolone-5-propanoate + H2O = N-formimidoyl-L-glutamate. The protein operates within amino-acid degradation; L-histidine degradation into L-glutamate; N-formimidoyl-L-glutamate from L-histidine: step 3/3. Functionally, catalyzes the hydrolytic cleavage of the carbon-nitrogen bond in imidazolone-5-propanoate to yield N-formimidoyl-L-glutamate. It is the third step in the universal histidine degradation pathway. The protein is Imidazolonepropionase of Rhizobium meliloti (strain 1021) (Ensifer meliloti).